Consider the following 85-residue polypeptide: NAD(P)H-quinone oxidoreductase subunit O (85 aa).

Belongs to the complex I NdhO subunit family. As to quaternary structure, NDH-1 can be composed of about 15 different subunits; different subcomplexes with different compositions have been identified which probably have different functions.

Its subcellular location is the cellular thylakoid membrane. The catalysed reaction is a plastoquinone + NADH + (n+1) H(+)(in) = a plastoquinol + NAD(+) + n H(+)(out). It catalyses the reaction a plastoquinone + NADPH + (n+1) H(+)(in) = a plastoquinol + NADP(+) + n H(+)(out). Functionally, NDH-1 shuttles electrons from an unknown electron donor, via FMN and iron-sulfur (Fe-S) centers, to quinones in the respiratory and/or the photosynthetic chain. The immediate electron acceptor for the enzyme in this species is believed to be plastoquinone. Couples the redox reaction to proton translocation, and thus conserves the redox energy in a proton gradient. Cyanobacterial NDH-1 also plays a role in inorganic carbon-concentration. The sequence is that of NAD(P)H-quinone oxidoreductase subunit O from Synechococcus sp. (strain CC9311).